Here is a 344-residue protein sequence, read N- to C-terminus: Dihydroorotase (344 aa).

Zn(2+) is bound by residues His14 and His16. Residues 16–18 (HFR) and Asn42 contribute to the substrate site. Residues Lys100, His137, and His175 each contribute to the Zn(2+) site. Lys100 carries the N6-carboxylysine modification. A substrate-binding site is contributed by His137. Residue Leu220 coordinates substrate. A Zn(2+)-binding site is contributed by Asp248. Asp248 is an active-site residue. 2 residues coordinate substrate: His252 and Ala264.

The protein belongs to the metallo-dependent hydrolases superfamily. DHOase family. Class II DHOase subfamily. In terms of assembly, homodimer. Requires Zn(2+) as cofactor.

The enzyme catalyses (S)-dihydroorotate + H2O = N-carbamoyl-L-aspartate + H(+). It functions in the pathway pyrimidine metabolism; UMP biosynthesis via de novo pathway; (S)-dihydroorotate from bicarbonate: step 3/3. In terms of biological role, catalyzes the reversible cyclization of carbamoyl aspartate to dihydroorotate. The sequence is that of Dihydroorotase from Erythrobacter litoralis (strain HTCC2594).